Consider the following 235-residue polypeptide: Adenosine 5'-phosphosulfate reductase (235 aa).

4 residues coordinate [4Fe-4S] cluster: Cys121, Cys122, Cys204, and Cys207. Cys230 serves as the catalytic Nucleophile; cysteine thiosulfonate intermediate.

Belongs to the PAPS reductase family. CysH subfamily. [4Fe-4S] cluster is required as a cofactor.

The protein resides in the cytoplasm. The catalysed reaction is [thioredoxin]-disulfide + sulfite + AMP + 2 H(+) = adenosine 5'-phosphosulfate + [thioredoxin]-dithiol. It functions in the pathway sulfur metabolism; hydrogen sulfide biosynthesis; sulfite from sulfate. Catalyzes the formation of sulfite from adenosine 5'-phosphosulfate (APS) using thioredoxin as an electron donor. The sequence is that of Adenosine 5'-phosphosulfate reductase from Geobacillus kaustophilus (strain HTA426).